The following is a 325-amino-acid chain: Holliday junction branch migration complex subunit RuvB (325 aa).

A large ATPase domain (RuvB-L) region spans residues 1-180 (MKNQLLDAKV…FGIHLKLNFY (180 aa)). ATP contacts are provided by residues leucine 19, arginine 20, glycine 61, lysine 64, threonine 65, serine 66, 127–129 (EDF), arginine 170, tyrosine 180, and arginine 217. Threonine 65 contributes to the Mg(2+) binding site. Residues 181–251 (SCEELTQIVE…ITDYALNQLG (71 aa)) are small ATPAse domain (RuvB-S). The head domain (RuvB-H) stretch occupies residues 254–325 (KLGLDSSDHK…ITANALKHLH (72 aa)). Positions 290, 309, and 314 each coordinate DNA.

Belongs to the RuvB family. As to quaternary structure, homohexamer. Forms an RuvA(8)-RuvB(12)-Holliday junction (HJ) complex. HJ DNA is sandwiched between 2 RuvA tetramers; dsDNA enters through RuvA and exits via RuvB. An RuvB hexamer assembles on each DNA strand where it exits the tetramer. Each RuvB hexamer is contacted by two RuvA subunits (via domain III) on 2 adjacent RuvB subunits; this complex drives branch migration. In the full resolvosome a probable DNA-RuvA(4)-RuvB(12)-RuvC(2) complex forms which resolves the HJ.

It is found in the cytoplasm. The enzyme catalyses ATP + H2O = ADP + phosphate + H(+). In terms of biological role, the RuvA-RuvB-RuvC complex processes Holliday junction (HJ) DNA during genetic recombination and DNA repair, while the RuvA-RuvB complex plays an important role in the rescue of blocked DNA replication forks via replication fork reversal (RFR). RuvA specifically binds to HJ cruciform DNA, conferring on it an open structure. The RuvB hexamer acts as an ATP-dependent pump, pulling dsDNA into and through the RuvAB complex. RuvB forms 2 homohexamers on either side of HJ DNA bound by 1 or 2 RuvA tetramers; 4 subunits per hexamer contact DNA at a time. Coordinated motions by a converter formed by DNA-disengaged RuvB subunits stimulates ATP hydrolysis and nucleotide exchange. Immobilization of the converter enables RuvB to convert the ATP-contained energy into a lever motion, pulling 2 nucleotides of DNA out of the RuvA tetramer per ATP hydrolyzed, thus driving DNA branch migration. The RuvB motors rotate together with the DNA substrate, which together with the progressing nucleotide cycle form the mechanistic basis for DNA recombination by continuous HJ branch migration. Branch migration allows RuvC to scan DNA until it finds its consensus sequence, where it cleaves and resolves cruciform DNA. This Orientia tsutsugamushi (strain Boryong) (Rickettsia tsutsugamushi) protein is Holliday junction branch migration complex subunit RuvB.